The primary structure comprises 317 residues: MAVKATKAEKKIVYDSKLCQLLNEYSQILVVAADNVGSTQLQNIRKGLRGDSVVLMGKNTMMKRSVRIHADKTGNQAFLSLLPLLQGNVGLIFTKGDLKEVSEEVAKYKVGAPARVGLVAPIDVVVQPGNTGLDPSQTSFFQVLNIPTKINKGTVEIITPVELIKKGDKVGSSEAALLAKLGIRPFSYGLVVESVYDNGSVFNPEVLNLTEDDLVEKFAAGVSMITALSLAISYPTVAAAPHMFLNAYKNVLAVALATEYSFPQAENVKEFLKDPTKFAVAVAAPVSGESGGAVVAVAVEEEAAEESDGDMGFDLFG.

This sequence belongs to the universal ribosomal protein uL10 family. In terms of assembly, P0 forms a pentameric complex by interaction with dimers of P1 and P2. Phosphorylated.

Its function is as follows. Ribosomal protein P0 is the functional equivalent of E.coli protein L10. This chain is Large ribosomal subunit protein uL10z (RPP0A), found in Arabidopsis thaliana (Mouse-ear cress).